We begin with the raw amino-acid sequence, 412 residues long: Phospholipase A1-IIdelta (412 aa).

Residue Ala-2 is modified to N-acetylalanine. Residue Ser-238 is the Acyl-ester intermediate of the active site. Active-site charge relay system residues include Ser-238, Asp-297, and His-336.

The protein belongs to the AB hydrolase superfamily. Lipase family. Expressed in leaves, stems, flowers and siliques, and, at low levels, in seeds and roots (at protein level).

The protein localises to the cytoplasm. Its function is as follows. Acylhydrolase that catalyzes the hydrolysis of phosphatidylcholine (PC) at the sn-1 position. High activity toward PC, medium activity toward monogalactosyldiacylglycerol (MGDG) and low activity toward triacylglycerol (TAG). Confers sensitivity to UV-B radiation probably by deesterifying membrane phospholipids. The protein is Phospholipase A1-IIdelta of Arabidopsis thaliana (Mouse-ear cress).